Here is a 198-residue protein sequence, read N- to C-terminus: Holliday junction branch migration complex subunit RuvA (198 aa).

A domain I region spans residues 1-64; it reads MIAHLRGTLL…EDAIALFGFL (64 aa). The domain II stretch occupies residues 65–141; sequence DREEKRLFER…LDDLIAAAPA (77 aa). A flexible linker region spans residues 141–145; sequence AAGPV. The tract at residues 146 to 198 is domain III; it reads AAGPAAEDVLSALLNLGYQRPAALKAIETAVEKDAAAGEDFDLLFRAALKLIR.

This sequence belongs to the RuvA family. In terms of assembly, homotetramer. Forms an RuvA(8)-RuvB(12)-Holliday junction (HJ) complex. HJ DNA is sandwiched between 2 RuvA tetramers; dsDNA enters through RuvA and exits via RuvB. An RuvB hexamer assembles on each DNA strand where it exits the tetramer. Each RuvB hexamer is contacted by two RuvA subunits (via domain III) on 2 adjacent RuvB subunits; this complex drives branch migration. In the full resolvosome a probable DNA-RuvA(4)-RuvB(12)-RuvC(2) complex forms which resolves the HJ.

The protein resides in the cytoplasm. In terms of biological role, the RuvA-RuvB-RuvC complex processes Holliday junction (HJ) DNA during genetic recombination and DNA repair, while the RuvA-RuvB complex plays an important role in the rescue of blocked DNA replication forks via replication fork reversal (RFR). RuvA specifically binds to HJ cruciform DNA, conferring on it an open structure. The RuvB hexamer acts as an ATP-dependent pump, pulling dsDNA into and through the RuvAB complex. HJ branch migration allows RuvC to scan DNA until it finds its consensus sequence, where it cleaves and resolves the cruciform DNA. This chain is Holliday junction branch migration complex subunit RuvA, found in Acidobacterium capsulatum (strain ATCC 51196 / DSM 11244 / BCRC 80197 / JCM 7670 / NBRC 15755 / NCIMB 13165 / 161).